The primary structure comprises 501 residues: Ribose import ATP-binding protein RbsA (501 aa).

ABC transporter domains are found at residues 5 to 241 (LQLK…VGRK) and 252 to 495 (APGD…VGKL). 37–44 (GENGAGKS) is a binding site for ATP.

Belongs to the ABC transporter superfamily. Ribose importer (TC 3.A.1.2.1) family. In terms of assembly, the complex is composed of an ATP-binding protein (RbsA), two transmembrane proteins (RbsC) and a solute-binding protein (RbsB).

The protein resides in the cell inner membrane. The catalysed reaction is D-ribose(out) + ATP + H2O = D-ribose(in) + ADP + phosphate + H(+). Part of the ABC transporter complex RbsABC involved in ribose import. Responsible for energy coupling to the transport system. This is Ribose import ATP-binding protein RbsA from Escherichia coli O6:H1 (strain CFT073 / ATCC 700928 / UPEC).